The chain runs to 70 residues: Homeobox protein CDX (70 aa).

Residues 1-60 constitute a DNA-binding region (homeobox); it reads PDKYRVVYTDYQRLELEKEFHYSRYITMNRKAELAKSLDLTERQIKIWFQNRRAKERKIN.

Belongs to the Caudal homeobox family.

It localises to the nucleus. The sequence is that of Homeobox protein CDX (CDX) from Lineus sanguineus (Ribbon worm).